Reading from the N-terminus, the 321-residue chain is Peroxidase 4 (321 aa).

A signal peptide spans 1–25; it reads MASSSFSIVVVALGVLALFAGSSSA. At Q26 the chain carries Pyrrolidone carboxylic acid. 4 disulfides stabilise this stretch: C36/C116, C69/C74, C122/C317, and C201/C226. H67 functions as the Proton acceptor in the catalytic mechanism. Residues D68, V71, G73, D75, and S77 each contribute to the Ca(2+) site. A substrate-binding site is contributed by P164. Position 194 (H194) interacts with heme b. T195 contacts Ca(2+). The N-linked (GlcNAc...) asparagine glycan is linked to N210. 3 residues coordinate Ca(2+): D241, T244, and D249.

This sequence belongs to the peroxidase family. Classical plant (class III) peroxidase subfamily. Heme b is required as a cofactor. Ca(2+) serves as cofactor.

The protein resides in the secreted. The enzyme catalyses 2 a phenolic donor + H2O2 = 2 a phenolic radical donor + 2 H2O. Removal of H(2)O(2), oxidation of toxic reductants, biosynthesis and degradation of lignin, suberization, auxin catabolism, response to environmental stresses such as wounding, pathogen attack and oxidative stress. These functions might be dependent on each isozyme/isoform in each plant tissue. The polypeptide is Peroxidase 4 (Vitis vinifera (Grape)).